Here is a 578-residue protein sequence, read N- to C-terminus: 2-hydroxyacyl-CoA lyase 1 (578 aa).

Serine 4 is subject to Phosphoserine. Glutamate 60 contacts thiamine diphosphate. N6-succinyllysine occurs at positions 351, 358, and 365. A thiamine pyrophosphate binding region spans residues 401–486 (TMDIGRTVLQ…LLVVNNNGIY (86 aa)). Mg(2+) contacts are provided by aspartate 455 and asparagine 482. The Microbody targeting signal signature appears at 576-578 (SNM).

This sequence belongs to the TPP enzyme family. In terms of assembly, homotetramer. Requires Mg(2+) as cofactor. Thiamine diphosphate serves as cofactor. Widely expressed.

The protein resides in the peroxisome. It carries out the reaction a 2-hydroxy-3-methyl fatty acyl-CoA = a 2-methyl-branched fatty aldehyde + formyl-CoA. The catalysed reaction is an (R)-2-hydroxy-long-chain-fatty acyl-CoA = a long-chain fatty aldehyde + formyl-CoA. It catalyses the reaction 2-hydroxy-3-methylhexadecanoyl-CoA = 2-methylpentadecanal + formyl-CoA. The enzyme catalyses 2-hydroxyoctadecanoyl-CoA = heptadecanal + formyl-CoA. It carries out the reaction 2-hydroxyphytanoyl-CoA = 2,6,10,14-tetramethylpentadecanal + formyl-CoA. It functions in the pathway lipid metabolism; fatty acid metabolism. Peroxisomal 2-OH acyl-CoA lyase involved in the cleavage (C1 removal) reaction in the fatty acid alpha-oxydation in a thiamine pyrophosphate (TPP)-dependent manner. Involved in the degradation of 3-methyl-branched fatty acids like phytanic acid and the shortening of 2-hydroxy long-chain fatty acids. Plays a significant role in the biosynthesis of heptadecanal in the liver. This Homo sapiens (Human) protein is 2-hydroxyacyl-CoA lyase 1.